A 266-amino-acid polypeptide reads, in one-letter code: Proteasome subunit alpha type-1 (266 aa).

Residues 235-266 (DGFKTRPEDIPAVADNEEDDDELHEQPPDVEE) are disordered. Residues 249 to 266 (DNEEDDDELHEQPPDVEE) are compositionally biased toward acidic residues.

It belongs to the peptidase T1A family. As to quaternary structure, the 26S proteasome consists of a 20S proteasome core and two 19S regulatory subunits. The 20S proteasome core is composed of 28 subunits that are arranged in four stacked rings, resulting in a barrel-shaped structure. The two end rings are each formed by seven alpha subunits, and the two central rings are each formed by seven beta subunits. The catalytic chamber with the active sites is on the inside of the barrel.

It is found in the cytoplasm. Its subcellular location is the nucleus. Its function is as follows. The proteasome is a multicatalytic proteinase complex which is characterized by its ability to cleave peptides with Arg, Phe, Tyr, Leu, and Glu adjacent to the leaving group at neutral or slightly basic pH. The proteasome has an ATP-dependent proteolytic activity. The chain is Proteasome subunit alpha type-1 from Trypanosoma brucei rhodesiense.